A 300-amino-acid chain; its full sequence is GTPase Era (300 aa).

The Era-type G domain maps to Arg5–Pro176. Residues Gly13–Ser20 form a G1 region. A GTP-binding site is contributed by Gly13–Ser20. Residues Gln39–His43 are G2. Residues Asp61–Gly64 are G3. GTP is bound by residues Asp61–Leu65 and Thr125–Asp128. Positions Thr125–Asp128 are G4. The G5 stretch occupies residues Val155–Ala157. The 80-residue stretch at Val207–Lys286 folds into the KH type-2 domain.

This sequence belongs to the TRAFAC class TrmE-Era-EngA-EngB-Septin-like GTPase superfamily. Era GTPase family. In terms of assembly, monomer.

The protein localises to the cell envelope. It is found in the secreted. The protein resides in the cell wall. In terms of biological role, exhibits GTPase activity. Binds RNA but is probably not involved in ribosome assembly in mycobacteria. This is GTPase Era from Mycobacterium leprae (strain TN).